The sequence spans 737 residues: Elongation factor 2 (737 aa).

The 245-residue stretch at Thr-18–Arg-262 folds into the tr-type G domain. Residues Ala-27 to Thr-34, Asp-93 to His-97, and Asn-147 to Asp-150 each bind GTP. His-604 is subject to Diphthamide.

Belongs to the TRAFAC class translation factor GTPase superfamily. Classic translation factor GTPase family. EF-G/EF-2 subfamily.

The protein localises to the cytoplasm. Catalyzes the GTP-dependent ribosomal translocation step during translation elongation. During this step, the ribosome changes from the pre-translocational (PRE) to the post-translocational (POST) state as the newly formed A-site-bound peptidyl-tRNA and P-site-bound deacylated tRNA move to the P and E sites, respectively. Catalyzes the coordinated movement of the two tRNA molecules, the mRNA and conformational changes in the ribosome. The polypeptide is Elongation factor 2 (fusA) (Sulfurisphaera tokodaii (strain DSM 16993 / JCM 10545 / NBRC 100140 / 7) (Sulfolobus tokodaii)).